A 377-amino-acid chain; its full sequence is Compound eye opsin BCRH2 (377 aa).

The Extracellular segment spans residues 1-53 (MTNATGPQMAYYGAASMDFGYPEGVSIVDFVRPEIKPYVHQHWYNYPPVNPMW). An N-linked (GlcNAc...) asparagine glycan is attached at Asn-3. Residues 54–78 (HYLLGVIYLFLGTVSIFGNGLVIYL) form a helical membrane-spanning segment. At 79–90 (FNKSAALRTPAN) the chain is on the cytoplasmic side. The chain crosses the membrane as a helical span at residues 91–115 (ILVVNLALSDLIMLTTNVPFFTYNC). The Extracellular segment spans residues 116–131 (FSGGVWMFSPQYCEIY). Cys-128 and Cys-205 form a disulfide bridge. Residues 132–151 (ACLGAITGVCSIWLLCMISF) form a helical membrane-spanning segment. At 152–170 (DRYNIICNGFNGPKLTTGK) the chain is on the cytoplasmic side. The helical transmembrane segment at 171 to 194 (AVVFALISWVIAIGCALPPFFGWG) threads the bilayer. Topologically, residues 195-218 (NYILEGILDSCSYDYLTQDFNTFS) are extracellular. A helical transmembrane segment spans residues 219–246 (YNIFIFVFDYFLPAAIIVFSYVFIVKAI). Topologically, residues 247-281 (FAHEAAMRAQAKKMNVSTLRSNEADAQRAEIRIAK) are cytoplasmic. Residues 282 to 305 (TALVNVSLWFICWTPYALISLKGV) traverse the membrane as a helical segment. Over 306 to 313 (MGDTSGIT) the chain is Extracellular. Residues 314–338 (PLVSTLPALLAKSCSCYNPFVYAIS) form a helical membrane-spanning segment. Position 325 is an N6-(retinylidene)lysine (Lys-325). The Cytoplasmic segment spans residues 339-377 (HPKYRLAITQHLPWFCVHETETKSNDDSQSNSTVAQDKA).

The protein belongs to the G-protein coupled receptor 1 family. Opsin subfamily. Post-translationally, phosphorylated on some or all of the serine and threonine residues present in the C-terminal region. Expressed in all of the seven retinular cells (R1-R7) forming the main rhabdom in each ommatidium.

The protein resides in the membrane. Visual pigments are the light-absorbing molecules that mediate vision. They consist of an apoprotein, opsin, covalently linked to cis-retinal. This opsin produces visual pigments with maximal absorption in the blue-green region of the spectrum. This is Compound eye opsin BCRH2 from Hemigrapsus sanguineus (Asian shore crab).